The sequence spans 707 residues: Complement C1r-A subcomponent (707 aa).

The first 16 residues, 1 to 16 (MWLFALLVTLFYGVEG), serve as a signal peptide directing secretion. A CUB 1 domain is found at 17–140 (SIYLPQKLYG…KGFLAYYQAV (124 aa)). Ca(2+) is bound by residues E65, D73, and D118. A disulfide bond links C70 and C88. A glycan (N-linked (GlcNAc...) asparagine) is linked at N124. The Ca(2+) site is built by D141, L142, and E144. The EGF-like; calcium-binding domain maps to 141–189 (DLDECASQPNSVEEGLQPRCQHLCHNYVGGYFCSCHPGYELQKDGQSCQ). 4 cysteine pairs are disulfide-bonded: C145–C164, C160–C173, C175–C188, and C192–C219. The Ca(2+) site is built by N166, Y167, and G170. At N166 the chain carries (3R)-3-hydroxyasparagine. The CUB 2 domain occupies 192-304 (CSSELYTEPS…RGWKLHYTTE (113 aa)). The residue at position 205 (S205) is a Phosphoserine; by CK2. N220 is a glycosylation site (N-linked (GlcNAc...) asparagine). Ca(2+) is bound by residues D242, D252, D289, and D293. Residues C249 and C267 are joined by a disulfide bond. 2 consecutive Sushi domains span residues 306 to 372 (IKCP…RCKI) and 373 to 448 (KNCG…RCLP). 5 disulfide bridges follow: C308–C357, C337–C370, C375–C428, C405–C446, and C450–C579. Residues 463-704 (IIRGQPARPG…YVDWIKKEMG (242 aa)) form the Peptidase S1 domain. Residues H501 and D559 each act as charge relay system in the active site. Residue N583 is glycosylated (N-linked (GlcNAc...) asparagine). Disulfide bonds link C622–C641 and C652–C682. S656 (charge relay system) is an active-site residue.

Belongs to the peptidase S1 family. Core component of the complement C1 complex, a calcium-dependent complex composed of 1 molecule of the C1Q subcomplex, 2 molecules of C1R and 2 molecules of C1S. The C1Q subcomplex is composed 18 subunits: 3 chains of C1QA, C1QB, and C1QC trimerize to form 6 collagen-like triple helices connected to six globular ligand-recognition modules. Within the C1 complex, C1R is a dimer of identical chains, each of which is activated by cleavage into two chains, heavy and light, connected by disulfide bonds. Post-translationally, cleaved and activated by autocatalytic processing to generate Complement C1r subcomponent heavy and light chains that are connected by disulfide bonds. In terms of processing, the iron and 2-oxoglutarate dependent 3-hydroxylation of aspartate and asparagine is (R) stereospecific within EGF domains.

The protein resides in the secreted. It is found in the cell surface. It carries out the reaction Selective cleavage of Lys(or Arg)-|-Ile bond in complement subcomponent C1s to form the active form of C1s (EC 3.4.21.42).. Activated by the C1Q subcomplex of the C1 complex following C1Q binding to immunoglobulins (IgG or IgM) complexed with antigens to form antigen-antibody complexes on the surface of pathogens. Immunoglobulin-binding promotes autoactivation of C1R, which results in the cleavage of the Arg-Ile bond in the catalytic domain. In terms of biological role, serine protease component of the complement C1 complex, a multiprotein complex that initiates the classical pathway of the complement system, a cascade of proteins that leads to phagocytosis and breakdown of pathogens and signaling that strengthens the adaptive immune system. C1R catalyzes the first enzymatic step in the classical complement pathway: it is activated by the C1Q subcomplex of the C1 complex, which associates with IgG or IgM immunoglobulins complexed with antigens to form antigen-antibody complexes on the surface of pathogens. Immunoglobulin-binding promotes the autocatalytic cleavage and activation of C1R. Activated C1R then cleaves and activates C1S, the second protease of the classical complement pathway. It is unclear if C1R activates C1S within single, strained C1 complexes or between neighboring C1 complexes on surfaces. This Mus musculus (Mouse) protein is Complement C1r-A subcomponent (C1ra).